The following is a 528-amino-acid chain: Probable GTP-binding protein OBGM, mitochondrial (528 aa).

The N-terminal 45 residues, 1–45 (MWRRQHALLRRISLPKPPAATGIGCYYATEPEGRKPKTAPLQSRG), are a transit peptide targeting the mitochondrion. In terms of domain architecture, Obg spans 46–339 (MVDRFRLRAK…TYLILELKSI (294 aa)). Disordered stretches follow at residues 52–87 (LRAKGGDGGNGCISLRRSRSDRQGKPDGGNGGRGGD) and 167–212 (HSPF…NHRG). Residues 77–86 (PDGGNGGRGG) show a composition bias toward gly residues. Basic and acidic residues predominate over residues 197-207 (NTAENDCERGN). The 174-residue stretch at 340–513 (ADVGLVGMPN…LRVGLRDLMD (174 aa)) folds into the OBG-type G domain. GTP is bound by residues 346–353 (GMPNAGKS) and 393–397 (DIPGL).

Belongs to the TRAFAC class OBG-HflX-like GTPase superfamily. OBG GTPase family.

It localises to the mitochondrion. May bind GTP and have GTPase activity. The protein is Probable GTP-binding protein OBGM, mitochondrial (OBGM) of Oryza sativa subsp. japonica (Rice).